The following is a 1384-amino-acid chain: ABC transporter C family member 2 (1384 aa).

One can recognise an ABC transmembrane type-1 1 domain in the interval 104-388 (NKISVATKIF…LPEAIHRALS (285 aa)). 5 helical membrane passes run 112-132 (IFVA…IYYI), 140-160 (TFKF…SLTL), 226-246 (IFVF…IVGL), 247-267 (SGLV…FLST), and 333-353 (MITQ…YALT). The ABC transporter 1 domain occupies 505-724 (IEYDGAVQPS…GIDFESIMKT (220 aa)). 537-544 (GIVGSGKT) lines the ATP pocket. Residues 729 to 756 (IDENDQSSTSTTDKKSSTSSSSSELKKS) are disordered. The span at 735 to 756 (SSTSTTDKKSSTSSSSSELKKS) shows a compositional bias: low complexity. 5 helical membrane passes run 813–833 (LFFL…LSDF), 852–872 (ILYY…RYFM), 941–961 (LFMM…LVVV), 1036–1056 (GIRL…SSLF), and 1061–1081 (GFSV…NWTI). The ABC transmembrane type-1 2 domain occupies 814 to 1093 (FFLTCALYFI…MTELEVKMNS (280 aa)). One can recognise an ABC transporter 2 domain in the interval 1137–1371 (VEFKNVEIKY…EGSRFKKLVK (235 aa)). 1171–1178 (GRTGAGKS) contacts ATP.

The protein belongs to the ABC transporter superfamily. ABCC family. Conjugate transporter (TC 3.A.1.208) subfamily.

The protein localises to the membrane. The polypeptide is ABC transporter C family member 2 (abcC2) (Dictyostelium discoideum (Social amoeba)).